The following is a 284-amino-acid chain: MDAIKKKMQAMKLEKDNAMDRALLCEQQARDANLRAEKAEEEARSLQKKIQQIENDLDQTMEQLMQVNAKLDEKDKALQNAESEVAALNRRIQLLEEDLERSEERLATATAKLAEASQAADESERARKILESKGLADEERMDALENQLKEARFMAEEADKKYDEVARKLAMVEADLERAEERAESGESKIVELEEELRVVGNNLKSLEVSEEKANLREEAYKQQIKTLTTRLKEAEARAEFAERSVQKLQKEVDRLEDELVHEKEKYKFICDDLDMTFTELIGN.

Residues 1–284 (MDAIKKKMQA…DMTFTELIGN (284 aa)) adopt a coiled-coil conformation.

The protein belongs to the tropomyosin family. In terms of assembly, homodimer.

Its function is as follows. Tropomyosin, in association with the troponin complex, plays a central role in the calcium dependent regulation of muscle contraction. In Periplaneta fuliginosa (Smokybrown cockroach), this protein is Tropomyosin.